Here is a 118-residue protein sequence, read N- to C-terminus: Small ribosomal subunit protein uS13 (118 aa).

Residues 92–118 (RRSLPVRGQRTKTNARTRKGPRKPIKK) are disordered.

It belongs to the universal ribosomal protein uS13 family. In terms of assembly, part of the 30S ribosomal subunit. Forms a loose heterodimer with protein S19. Forms two bridges to the 50S subunit in the 70S ribosome.

In terms of biological role, located at the top of the head of the 30S subunit, it contacts several helices of the 16S rRNA. In the 70S ribosome it contacts the 23S rRNA (bridge B1a) and protein L5 of the 50S subunit (bridge B1b), connecting the 2 subunits; these bridges are implicated in subunit movement. Contacts the tRNAs in the A and P-sites. The sequence is that of Small ribosomal subunit protein uS13 from Acinetobacter baumannii (strain AB307-0294).